The sequence spans 365 residues: DNA polymerase IV (365 aa).

The 182-residue stretch at 7 to 188 (IIHIDMDAFY…LPVNKFFGVG (182 aa)) folds into the UmuC domain. Mg(2+)-binding residues include aspartate 11 and aspartate 106. Residue glutamate 107 is part of the active site.

This sequence belongs to the DNA polymerase type-Y family. Monomer. Requires Mg(2+) as cofactor.

It is found in the cytoplasm. It carries out the reaction DNA(n) + a 2'-deoxyribonucleoside 5'-triphosphate = DNA(n+1) + diphosphate. Its function is as follows. Poorly processive, error-prone DNA polymerase involved in untargeted mutagenesis. Copies undamaged DNA at stalled replication forks, which arise in vivo from mismatched or misaligned primer ends. These misaligned primers can be extended by PolIV. Exhibits no 3'-5' exonuclease (proofreading) activity. May be involved in translesional synthesis, in conjunction with the beta clamp from PolIII. In Clostridioides difficile (strain 630) (Peptoclostridium difficile), this protein is DNA polymerase IV.